Consider the following 249-residue polypeptide: Triosephosphate isomerase (249 aa).

The substrate site is built by Asn-12 and Lys-14. At Lys-14 the chain carries N6-acetyllysine. The residue at position 68 (Tyr-68) is a 3'-nitrotyrosine. At Ser-80 the chain carries Phosphoserine. His-96 acts as the Electrophile in catalysis. A Phosphoserine modification is found at Ser-106. Residue Lys-142 forms a Glycyl lysine isopeptide (Lys-Gly) (interchain with G-Cter in SUMO1) linkage. Lys-149 is modified (N6-succinyllysine). N6-acetyllysine; alternate is present on Lys-156. Residue Lys-156 is modified to N6-succinyllysine; alternate. Ser-159 carries the post-translational modification Phosphoserine. Glu-166 acts as the Proton acceptor in catalysis. Position 173 is a phosphothreonine (Thr-173). Position 194 is an N6-acetyllysine; alternate (Lys-194). Lys-194 bears the N6-succinyllysine; alternate mark. Lys-194 is subject to N6-methyllysine; alternate. A Phosphoserine modification is found at Ser-198. Residue Tyr-209 is modified to 3'-nitrotyrosine. Phosphoserine is present on Ser-212. Thr-214 is modified (phosphothreonine). Position 223 is a phosphoserine (Ser-223). Lys-238 carries the N6-acetyllysine modification.

The protein belongs to the triosephosphate isomerase family. As to quaternary structure, homodimer.

The protein resides in the cytoplasm. The enzyme catalyses dihydroxyacetone phosphate = methylglyoxal + phosphate. The catalysed reaction is D-glyceraldehyde 3-phosphate = dihydroxyacetone phosphate. It functions in the pathway carbohydrate degradation; glycolysis; D-glyceraldehyde 3-phosphate from glycerone phosphate: step 1/1. It participates in carbohydrate biosynthesis; gluconeogenesis. Its function is as follows. Triosephosphate isomerase is an extremely efficient metabolic enzyme that catalyzes the interconversion between dihydroxyacetone phosphate (DHAP) and D-glyceraldehyde-3-phosphate (G3P) in glycolysis and gluconeogenesis. Functionally, it is also responsible for the non-negligible production of methylglyoxal a reactive cytotoxic side-product that modifies and can alter proteins, DNA and lipids. This chain is Triosephosphate isomerase (TPI1), found in Pongo abelii (Sumatran orangutan).